Reading from the N-terminus, the 171-residue chain is Ribosome maturation factor RimM (171 aa).

The PRC barrel domain maps to 98–170 (EGEFYLHQII…AVQVSVPEGL (73 aa)).

The protein belongs to the RimM family. As to quaternary structure, binds ribosomal protein uS19.

The protein localises to the cytoplasm. Its function is as follows. An accessory protein needed during the final step in the assembly of 30S ribosomal subunit, possibly for assembly of the head region. Essential for efficient processing of 16S rRNA. May be needed both before and after RbfA during the maturation of 16S rRNA. It has affinity for free ribosomal 30S subunits but not for 70S ribosomes. The protein is Ribosome maturation factor RimM of Pediococcus pentosaceus (strain ATCC 25745 / CCUG 21536 / LMG 10740 / 183-1w).